Reading from the N-terminus, the 237-residue chain is B3 domain-containing protein At1g20600 (237 aa).

A disordered region spans residues 53 to 79; sequence LVSQANQKQSRKREEKTEKNQPKRVKN. Residues 64 to 73 are compositionally biased toward basic and acidic residues; it reads KREEKTEKNQ. The TF-B3 DNA-binding region spans 126–230; the sequence is KKQLMSSDVD…LEHVFIRGSK (105 aa).

Its subcellular location is the nucleus. The chain is B3 domain-containing protein At1g20600 from Arabidopsis thaliana (Mouse-ear cress).